The following is a 290-amino-acid chain: Oxaloacetate decarboxylase 2 (290 aa).

Ser-50 contributes to the substrate binding site. Asp-88 provides a ligand contact to Mg(2+). Residues Arg-159 and His-235 each coordinate substrate.

This sequence belongs to the isocitrate lyase/PEP mutase superfamily. Oxaloacetate decarboxylase family. As to quaternary structure, homotetramer; dimer of dimers. It depends on Mg(2+) as a cofactor.

It catalyses the reaction oxaloacetate + H(+) = pyruvate + CO2. Catalyzes the decarboxylation of oxaloacetate into pyruvate. Seems to play a role in maintaining cellular concentrations of bicarbonate and pyruvate. This Pseudomonas fluorescens (strain Pf0-1) protein is Oxaloacetate decarboxylase 2.